A 375-amino-acid polypeptide reads, in one-letter code: Anhydro-N-acetylmuramic acid kinase (375 aa).

Gly13–Asp20 contacts ATP.

Belongs to the anhydro-N-acetylmuramic acid kinase family.

The enzyme catalyses 1,6-anhydro-N-acetyl-beta-muramate + ATP + H2O = N-acetyl-D-muramate 6-phosphate + ADP + H(+). It participates in amino-sugar metabolism; 1,6-anhydro-N-acetylmuramate degradation. It functions in the pathway cell wall biogenesis; peptidoglycan recycling. In terms of biological role, catalyzes the specific phosphorylation of 1,6-anhydro-N-acetylmuramic acid (anhMurNAc) with the simultaneous cleavage of the 1,6-anhydro ring, generating MurNAc-6-P. Is required for the utilization of anhMurNAc either imported from the medium or derived from its own cell wall murein, and thus plays a role in cell wall recycling. The sequence is that of Anhydro-N-acetylmuramic acid kinase from Pelagibacter ubique (strain HTCC1062).